A 392-amino-acid polypeptide reads, in one-letter code: Small ribosomal subunit protein uS9m (392 aa).

Residues 8–25 (RSSRAMSSASPASASDSD) show a composition bias toward low complexity. The segment at 8–27 (RSSRAMSSASPASASDSDTS) is disordered.

The protein belongs to the universal ribosomal protein uS9 family. Component of the mitochondrial ribosome small subunit (28S) which comprises a 12S rRNA and about 30 distinct proteins.

The protein resides in the mitochondrion. The polypeptide is Small ribosomal subunit protein uS9m (mrps-9) (Caenorhabditis elegans).